We begin with the raw amino-acid sequence, 394 residues long: Flavohemoprotein (394 aa).

Residues M1–E136 form the Globin domain. H85 lines the heme b pocket. Residues Y95 and E135 each act as charge relay system in the active site. Positions G147–V394 are reductase. Positions R150 to D255 constitute an FAD-binding FR-type domain. Residues Y188 and R204–S207 contribute to the FAD site. G268–P273 is a binding site for NADP(+). Position 387–390 (C387–P390) interacts with FAD.

This sequence belongs to the globin family. Two-domain flavohemoproteins subfamily. In the C-terminal section; belongs to the flavoprotein pyridine nucleotide cytochrome reductase family. Heme b is required as a cofactor. FAD serves as cofactor.

It carries out the reaction 2 nitric oxide + NADPH + 2 O2 = 2 nitrate + NADP(+) + H(+). It catalyses the reaction 2 nitric oxide + NADH + 2 O2 = 2 nitrate + NAD(+) + H(+). Is involved in NO detoxification in an aerobic process, termed nitric oxide dioxygenase (NOD) reaction that utilizes O(2) and NAD(P)H to convert NO to nitrate, which protects the bacterium from various noxious nitrogen compounds. Therefore, plays a central role in the inducible response to nitrosative stress. This Vibrio vulnificus (strain YJ016) protein is Flavohemoprotein.